A 329-amino-acid chain; its full sequence is Malate dehydrogenase (329 aa).

12–18 (GAAGQIG) lines the NAD(+) pocket. Positions 93 and 99 each coordinate substrate. NAD(+) is bound by residues asparagine 106, glutamine 113, and 130 to 132 (VGN). Substrate is bound by residues asparagine 132 and arginine 163. Histidine 188 functions as the Proton acceptor in the catalytic mechanism.

The protein belongs to the LDH/MDH superfamily. MDH type 2 family.

The enzyme catalyses (S)-malate + NAD(+) = oxaloacetate + NADH + H(+). In terms of biological role, catalyzes the reversible oxidation of malate to oxaloacetate. The protein is Malate dehydrogenase of Frankia alni (strain DSM 45986 / CECT 9034 / ACN14a).